The following is a 348-amino-acid chain: Quinone oxidoreductase-like protein 1 (348 aa).

It belongs to the zinc-containing alcohol dehydrogenase family. Quinone oxidoreductase subfamily. As to quaternary structure, component of the FERRY complex composed of five subunits, TBCK, PPP1R21, FERRY3, CRYZL1 and GATD1 with a ratio of 1:2:1:2:4, respectively.

It is found in the early endosome. Component of the FERRY complex (Five-subunit Endosomal Rab5 and RNA/ribosome intermediary). The FERRY complex directly interacts with mRNAs and RAB5A, and functions as a RAB5A effector involved in the localization and the distribution of specific mRNAs most likely by mediating their endosomal transport. The complex recruits mRNAs and ribosomes to early endosomes through direct mRNA-interaction. The polypeptide is Quinone oxidoreductase-like protein 1 (Cryzl1) (Mus musculus (Mouse)).